The primary structure comprises 708 residues: Double-strand break repair protein MRE11 (708 aa).

Serine 2 is modified (N-acetylserine). Serine 2 carries the phosphoserine modification. The Mn(2+) site is built by aspartate 20, histidine 22, and aspartate 60. Residues 87-117 (RPVQFEILSDQSVNFGFSKFPWVNYQDGNLN) form an interaction with NBN region. Asparagine 128 provides a ligand contact to Mn(2+). Histidine 129 acts as the Proton donor in catalysis. Mn(2+) is bound by residues histidine 217, histidine 245, and histidine 247. A Glycyl lysine isopeptide (Lys-Gly) (interchain with G-Cter in SUMO2) cross-link involves residue lysine 255. Residue serine 275 is modified to Phosphoserine. Lysine 282 is covalently cross-linked (Glycyl lysine isopeptide (Lys-Gly) (interchain with G-Cter in UFM1)). A Glycyl lysine isopeptide (Lys-Gly) (interchain with G-Cter in ubiquitin) cross-link involves residue lysine 339. Lysine 384 is covalently cross-linked (Glycyl lysine isopeptide (Lys-Gly) (interchain with G-Cter in SUMO)). A Glycyl lysine isopeptide (Lys-Gly) (interchain with G-Cter in SUMO2) cross-link involves residue lysine 416. Residue lysine 467 forms a Glycyl lysine isopeptide (Lys-Gly) (interchain with G-Cter in SUMO) linkage. Lysine 480 is covalently cross-linked (Glycyl lysine isopeptide (Lys-Gly) (interchain with G-Cter in ubiquitin)). 2 disordered regions span residues 507–540 (TRQK…ASAF) and 556–614 (NDSD…AVSA). A compositionally biased stretch (basic residues) spans 569–579 (GRGRGRGRRGG). Arginine 570, arginine 572, arginine 574, arginine 576, arginine 577, arginine 580, arginine 587, arginine 592, and arginine 594 each carry asymmetric dimethylarginine. Positions 570–594 (RGRGRGRRGGRGQNSASRGGSQRGR) match the GAR motif. Polar residues predominate over residues 599 to 614 (LETSTRSRNSKTAVSA). Serine 619 is subject to Phosphoserine. Lysine 625 participates in a covalent cross-link: Glycyl lysine isopeptide (Lys-Gly) (interchain with G-Cter in SUMO2). Serine 641 carries the phosphoserine modification. Residue serine 649 is modified to Phosphoserine; by PLK1. The segment at 651-708 (VEEDIFPTTSKTDQRWSSTSSSKIMSQSQVSKGVDFESSEDDDDDPFMNTSSLRRNRR) is disordered. Residues 667–681 (SSTSSSKIMSQSQVS) are compositionally biased toward low complexity. Residue lysine 673 is modified to N6-lactoyllysine. Phosphoserine; by ATM is present on residues serine 676 and serine 678. Acidic residues predominate over residues 687-696 (ESSEDDDDDP). Phosphoserine; by CDK2 is present on serine 688. Phosphoserine occurs at positions 689 and 701. Polar residues predominate over residues 698–708 (MNTSSLRRNRR).

Belongs to the MRE11/RAD32 family. In terms of assembly, component of the MRN complex composed of two heterodimers RAD50 and MRE11 associated with a single NBN. The MRN complexes dimerize on DNA to form joined MRN-MRN oligomers required for DNA double-strand break repair. As part of the MRN complex, interacts with MCM9; the interaction recruits the complex to DNA repair sites. Component of the BASC complex, at least composed of BRCA1, MSH2, MSH6, MLH1, ATM, BLM, RAD50, MRE11 and NBN. Found in a complex with TERF2. Interacts with DCLRE1C/Artemis and DCLRE1B/Apollo. Interacts with ATF2. Interacts with EXD2. Interacts with MRNIP. Interacts with SAMHD1; leading to stimulate 3'-5' exonuclease activity. Interacts (when ubiquitinated) with UBQLN4 (via its UBA domain). Interacts with CYREN (via XLF motif). Interacts with GFI1; promoting methylation by PRMT1. Interacts with DYNLL1; inhibiting the activity of MRE11. Interacts with C1QBP and RAD50; interaction takes place in absence of DNA damage to form the MRC (MRE11-RAD50-C1QBP) complex that inhibits the activity of MRE11. Interacts with AGER/RAGE. AGER is recruited to DNA double-strand break sites where it enhances MRE11 endonuclease activity to promote DNA repair. As to quaternary structure, (Microbial infection) Interacts with herpes simplex virus 1 protein UL12. It depends on Mn(2+) as a cofactor. Phosphorylated by ATM at Ser-676 and Ser-678 in response to DNA damage, promoting MRE11 activity: phosphorylation activates MRE11 by preventing the interaction between MRE11 and the C1QBP inhibitor. Phosphorylation at Ser-649 by PLK1 primes for phosphorylation at Ser-688 by CK2, inhibiting recruitment of the MRN complex to DNA damage sites. Post-translationally, asymmetric dimethylation by PRMT1 promotes MRE11 exonuclease activity. In terms of processing, lactylation at Lys-673 by CREBBP/CBP in response to DNA damage promotes DNA binding and MRE11 activity. Acetylated on lysine residues by KAT2A /GCN5. Post-translationally, ubiquitinated following DNA damage. Ubiquitination triggers interaction with UBQLN4, leading to MRE11 removal from chromatin and degradation by the proteasome. Ubiquitinated at Lys-339 and Lys-480 by RNF126 via 'Lys-27'- and 'Lys-29'-linked polyubiquitin chains, promoting the exonuclease activity of MRE11. In terms of processing, SUMOylated by PIAS1, stabilizing MRE11 on chromatin during end resection. DeSUMOylated by SENP3 following removal from DNA double-strand breaks (DSBs). Ufmylation at Lys-282 promotes MRE11 activity and is required for activation of the ATM and ATR kinases by the MRN complex. Post-translationally, (Microbial infection) Following infection by adenovirus E4, ubiquitinated and degraded by a SCF-like E3 ubiquitin ligase complex containing viral proteins E1B-55K and E4-ORF6.

It is found in the nucleus. The protein localises to the chromosome. Its subcellular location is the telomere. Its activity is regulated as follows. Interaction with SAMHD1 stimulates the double-strand-specific 3'-5' exonuclease activity. RBBP8/CtIP specifically promotes the endonuclease activity to clear protein-DNA adducts and generate clean double-strand break ends. DYNLL1-binding inhibits the activity of MRE11. MRE11 activity is inhibited by C1QBP: in absence of DNA damage, C1QBP interacts with unphosphorylated MRE11, preventing formation and activity of the MRN complex. The mirin-derivative PFM39, specifically inhibits the 3'-5' exonuclease activity. The N-alkylated mirin-derivatives PFM03 and PFM01 specifically inhibit the endonuclease activity. Functionally, core component of the MRN complex, which plays a central role in double-strand break (DSB) repair, DNA recombination, maintenance of telomere integrity and meiosis. The MRN complex is involved in the repair of DNA double-strand breaks (DSBs) via homologous recombination (HR), an error-free mechanism which primarily occurs during S and G2 phases. The complex (1) mediates the end resection of damaged DNA, which generates proper single-stranded DNA, a key initial steps in HR, and is (2) required for the recruitment of other repair factors and efficient activation of ATM and ATR upon DNA damage. Within the MRN complex, MRE11 possesses both single-strand endonuclease activity and double-strand-specific 3'-5' exonuclease activity. After DSBs, MRE11 is loaded onto DSBs sites and cleaves DNA by cooperating with RBBP8/CtIP to initiate end resection. MRE11 first endonucleolytically cleaves the 5' strand at DNA DSB ends to prevent non-homologous end joining (NHEJ) and licence HR. It then generates a single-stranded DNA gap via 3' to 5' exonucleolytic degradation to create entry sites for EXO1- and DNA2-mediated 5' to 3' long-range resection, which is required for single-strand invasion and recombination. RBBP8/CtIP specifically promotes the endonuclease activity of MRE11 to clear protein-DNA adducts and generate clean double-strand break ends. MRE11 endonuclease activity is also enhanced by AGER/RAGE. The MRN complex is also required for DNA damage signaling via activation of the ATM and ATR kinases: the nuclease activity of MRE11 is not required to activate ATM and ATR. The MRN complex is also required for the processing of R-loops. The MRN complex is involved in the activation of the cGAS-STING pathway induced by DNA damage during tumorigenesis: the MRN complex acts by displacing CGAS from nucleosome sequestration, thereby activating it. In telomeres the MRN complex may modulate t-loop formation. In terms of biological role, MRE11 contains two DNA-binding domains (DBDs), enabling it to bind both single-stranded DNA (ssDNA) and double-stranded DNA (dsDNA). This chain is Double-strand break repair protein MRE11, found in Homo sapiens (Human).